A 588-amino-acid chain; its full sequence is Hyaluronan synthase 1 (588 aa).

Topologically, residues 1–28 (MKEKAAETMEIPEGIPKDLEPKHPTLWR) are cytoplasmic. Residues 29–49 (IIYYSFGVVLLATITAAYVAE) traverse the membrane as a helical segment. Residues 50–61 (FQVLKHEAILFS) lie on the Extracellular side of the membrane. A helical transmembrane segment spans residues 62–82 (LGLYGLAMLLHLMMQSLFAFL). Residues 83–411 (EIRRVNKSEL…IWMTYESVVS (329 aa)) are Cytoplasmic-facing. Residues 412–432 (FIFPFFITATVIRLIYAGTIW) form a helical membrane-spanning segment. Position 433 (asparagine 433) is a topological domain, extracellular. The helical transmembrane segment at 434–454 (VVWLLLCIQIMSLFKSIYACW) threads the bilayer. Over 455 to 456 (LR) the chain is Cytoplasmic. The chain crosses the membrane as a helical span at residues 457 to 477 (GNFIMLLMSLYSMLYMTGLLP). The Extracellular segment spans residues 478–505 (SKYFALLTLNKTGWGTSGRKKIVGNYMP). The chain crosses the membrane as a helical span at residues 506–526 (ILPLSIWAAVLCGGVGYSIYM). The Cytoplasmic segment spans residues 527–543 (DCQNDWSTPEKQKEMYH). The chain crosses the membrane as a helical span at residues 544–564 (LLYGCVGYVMYWVIMAVMYWV). At 565–588 (WVKRCCRKRSQTVTLVHDIPDMCV) the chain is on the extracellular side.

It belongs to the NodC/HAS family. Mg(2+) serves as cofactor. As to expression, expression moves as a gradient through the embryo. The mRNA is first expressed in the animal region of the blastula, and by early gastrula is found everywhere except in the outer layer of the dorsal blastopore lip. By mid-gastrula, protein is present in the inner ectodermal layer and the endoderm, then disappears from dorsal ectoderm as the neural plate is induced and later decays in a dorsoventral direction. Last expressed in ventral regions of the gut at the tailbud stage (at protein level).

The protein resides in the membrane. It catalyses the reaction [hyaluronan](n) + UDP-N-acetyl-alpha-D-glucosamine = N-acetyl-beta-D-glucosaminyl-(1-&gt;4)-[hyaluronan](n) + UDP + H(+). The catalysed reaction is N-acetyl-beta-D-glucosaminyl-(1-&gt;4)-[hyaluronan](n) + UDP-alpha-D-glucuronate = [hyaluronan](n+1) + UDP + H(+). It participates in glycan biosynthesis; hyaluronan biosynthesis. Catalyzes the addition of GlcNAc or GlcUA monosaccharides to the nascent hyaluronan polymer. Therefore, it is essential to hyaluronan synthesis a major component of most extracellular matrices that has a structural role in tissues architectures and regulates cell adhesion, migration and differentiation. Also able to catalyze the synthesis of chito-oligosaccharide depending on the substrate. The sequence is that of Hyaluronan synthase 1 (has1) from Xenopus laevis (African clawed frog).